The sequence spans 468 residues: Beta-monoglucosyldiacylglycerol synthase (468 aa).

The next 4 helical transmembrane spans lie at 51–71, 72–92, 361–381, and 387–407; these read AALVLTIVWSGTIALHLVSWG, SIFILGLTTVLGIHALGVVFA, FMLTMYILPTAAIPDLLMAVV, and MLGPVTGLSVTMSVVGMFAGL.

The protein belongs to the glycosyltransferase 2 family. Mg(2+) serves as cofactor.

The protein resides in the membrane. It catalyses the reaction a 1,2-diacyl-sn-glycerol + UDP-alpha-D-glucose = a 1,2-diacyl-3-O-(beta-D-glucopyranosyl)-sn-glycerol + UDP + H(+). Glucosyltransferase involved in the biosynthesis of the non-bilayer-forming membrane lipid beta-monoglucosyldiacylglycerol which contributes to regulate the properties and stability of the membrane. Catalyzes the transfer of a glucosyl residue from UDP-Glc to diacylglycerol (DAG) acceptor to form the corresponding beta-glucosyl-DAG (1,2-diacyl-3-O-(beta-D-glucopyranosyl)-sn-glycerol). It can only use UDP-Glc as sugar donor. The protein is Beta-monoglucosyldiacylglycerol synthase of Trichormus variabilis (strain ATCC 29413 / PCC 7937) (Anabaena variabilis).